Here is a 388-residue protein sequence, read N- to C-terminus: Chorismate synthase (388 aa).

R39 and R45 together coordinate NADP(+). Residues 130 to 132 (RSS), 251 to 252 (NA), G296, 311 to 315 (KPIPT), and R337 contribute to the FMN site.

It belongs to the chorismate synthase family. As to quaternary structure, homotetramer. FMNH2 serves as cofactor.

The enzyme catalyses 5-O-(1-carboxyvinyl)-3-phosphoshikimate = chorismate + phosphate. It participates in metabolic intermediate biosynthesis; chorismate biosynthesis; chorismate from D-erythrose 4-phosphate and phosphoenolpyruvate: step 7/7. Its function is as follows. Catalyzes the anti-1,4-elimination of the C-3 phosphate and the C-6 proR hydrogen from 5-enolpyruvylshikimate-3-phosphate (EPSP) to yield chorismate, which is the branch point compound that serves as the starting substrate for the three terminal pathways of aromatic amino acid biosynthesis. This reaction introduces a second double bond into the aromatic ring system. The polypeptide is Chorismate synthase (Streptococcus sanguinis (strain SK36)).